Consider the following 553-residue polypeptide: Pseudouridylate synthase RPUSD2 (553 aa).

Residues 76-135 (AVGKQVPESGDQAQGGEGQLPSNGEQTPAPVADSGKRKKRRGATGERVVPPPKKRRTGVS) are disordered. Residue Asp287 is part of the active site. Thr490 carries the post-translational modification Phosphothreonine.

The protein belongs to the pseudouridine synthase RluA family.

It carries out the reaction a uridine in mRNA = a pseudouridine in mRNA. Functionally, pseudouridine synthase that catalyzes pseudouridylation of mRNAs. This Mus musculus (Mouse) protein is Pseudouridylate synthase RPUSD2.